An 89-amino-acid chain; its full sequence is MALQHDVKQEIINTYQIHGTDTGSTDVQVAILTERIKQLSEHLKVNKKDHASRRGLLKIIGRRKRLLAYLYRHDPQRYQQLIERLGIRG.

It belongs to the universal ribosomal protein uS15 family. As to quaternary structure, part of the 30S ribosomal subunit. Forms a bridge to the 50S subunit in the 70S ribosome, contacting the 23S rRNA.

Functionally, one of the primary rRNA binding proteins, it binds directly to 16S rRNA where it helps nucleate assembly of the platform of the 30S subunit by binding and bridging several RNA helices of the 16S rRNA. In terms of biological role, forms an intersubunit bridge (bridge B4) with the 23S rRNA of the 50S subunit in the ribosome. This Thermosynechococcus vestitus (strain NIES-2133 / IAM M-273 / BP-1) protein is Small ribosomal subunit protein uS15.